A 339-amino-acid chain; its full sequence is tRNA pseudouridine synthase B (339 aa).

D40 (nucleophile) is an active-site residue. An RPE1 insert domain is found at 262–307; it reads FRRLSKFAYREEFEENTERSTAAYTLVREDANTGLTYKLPLEVELS.

Belongs to the pseudouridine synthase TruB family. Type 1 subfamily.

It catalyses the reaction uridine(55) in tRNA = pseudouridine(55) in tRNA. Its function is as follows. Responsible for synthesis of pseudouridine from uracil-55 in the psi GC loop of transfer RNAs. The protein is tRNA pseudouridine synthase B of Rickettsia felis (strain ATCC VR-1525 / URRWXCal2) (Rickettsia azadi).